The primary structure comprises 432 residues: Adenylosuccinate synthetase (432 aa).

GTP contacts are provided by residues 12–18 (GDEGKGK) and 40–42 (GHT). The active-site Proton acceptor is the Asp-13. Residues Asp-13 and Gly-40 each contribute to the Mg(2+) site. IMP-binding positions include 13 to 16 (DEGK), 38 to 41 (NAGH), Thr-126, Arg-140, Gln-219, Thr-234, and Arg-300. Residue His-41 is the Proton donor of the active site. 296–302 (STTGRPR) serves as a coordination point for substrate. Residues Arg-302, 328–330 (KLD), and 410–412 (STG) contribute to the GTP site.

This sequence belongs to the adenylosuccinate synthetase family. Homodimer. The cofactor is Mg(2+).

Its subcellular location is the cytoplasm. The enzyme catalyses IMP + L-aspartate + GTP = N(6)-(1,2-dicarboxyethyl)-AMP + GDP + phosphate + 2 H(+). It functions in the pathway purine metabolism; AMP biosynthesis via de novo pathway; AMP from IMP: step 1/2. Functionally, plays an important role in the de novo pathway of purine nucleotide biosynthesis. Catalyzes the first committed step in the biosynthesis of AMP from IMP. This Aquifex aeolicus (strain VF5) protein is Adenylosuccinate synthetase.